The sequence spans 333 residues: 4-hydroxy-3-methylbut-2-enyl diphosphate reductase (333 aa).

Position 20 (Cys20) interacts with [4Fe-4S] cluster. (2E)-4-hydroxy-3-methylbut-2-enyl diphosphate contacts are provided by His49 and His85. 2 residues coordinate dimethylallyl diphosphate: His49 and His85. Isopentenyl diphosphate contacts are provided by His49 and His85. Cys107 contacts [4Fe-4S] cluster. His135 provides a ligand contact to (2E)-4-hydroxy-3-methylbut-2-enyl diphosphate. A dimethylallyl diphosphate-binding site is contributed by His135. Isopentenyl diphosphate is bound at residue His135. Glu137 acts as the Proton donor in catalysis. Thr176 contributes to the (2E)-4-hydroxy-3-methylbut-2-enyl diphosphate binding site. Cys206 serves as a coordination point for [4Fe-4S] cluster. Ser234, Ser235, Asn236, and Ser279 together coordinate (2E)-4-hydroxy-3-methylbut-2-enyl diphosphate. Ser234, Ser235, Asn236, and Ser279 together coordinate dimethylallyl diphosphate. 4 residues coordinate isopentenyl diphosphate: Ser234, Ser235, Asn236, and Ser279.

This sequence belongs to the IspH family. [4Fe-4S] cluster serves as cofactor.

The enzyme catalyses isopentenyl diphosphate + 2 oxidized [2Fe-2S]-[ferredoxin] + H2O = (2E)-4-hydroxy-3-methylbut-2-enyl diphosphate + 2 reduced [2Fe-2S]-[ferredoxin] + 2 H(+). The catalysed reaction is dimethylallyl diphosphate + 2 oxidized [2Fe-2S]-[ferredoxin] + H2O = (2E)-4-hydroxy-3-methylbut-2-enyl diphosphate + 2 reduced [2Fe-2S]-[ferredoxin] + 2 H(+). The protein operates within isoprenoid biosynthesis; dimethylallyl diphosphate biosynthesis; dimethylallyl diphosphate from (2E)-4-hydroxy-3-methylbutenyl diphosphate: step 1/1. It participates in isoprenoid biosynthesis; isopentenyl diphosphate biosynthesis via DXP pathway; isopentenyl diphosphate from 1-deoxy-D-xylulose 5-phosphate: step 6/6. Its function is as follows. Catalyzes the conversion of 1-hydroxy-2-methyl-2-(E)-butenyl 4-diphosphate (HMBPP) into a mixture of isopentenyl diphosphate (IPP) and dimethylallyl diphosphate (DMAPP). Acts in the terminal step of the DOXP/MEP pathway for isoprenoid precursor biosynthesis. The chain is 4-hydroxy-3-methylbut-2-enyl diphosphate reductase from Rhizobium leguminosarum bv. trifolii (strain WSM2304).